Consider the following 590-residue polypeptide: Aspartate--tRNA(Asp/Asn) ligase (590 aa).

Residue glutamate 176 coordinates L-aspartate. The aspartate stretch occupies residues glutamine 200 to lysine 203. Arginine 222 and histidine 451 together coordinate L-aspartate. Arginine 222–glutamate 224 contributes to the ATP binding site. An ATP-binding site is contributed by glutamate 485. Residue arginine 492 coordinates L-aspartate. An ATP-binding site is contributed by glycine 537–arginine 540.

Belongs to the class-II aminoacyl-tRNA synthetase family. Type 1 subfamily. As to quaternary structure, homodimer.

The protein localises to the cytoplasm. It catalyses the reaction tRNA(Asx) + L-aspartate + ATP = L-aspartyl-tRNA(Asx) + AMP + diphosphate. In terms of biological role, aspartyl-tRNA synthetase with relaxed tRNA specificity since it is able to aspartylate not only its cognate tRNA(Asp) but also tRNA(Asn). Reaction proceeds in two steps: L-aspartate is first activated by ATP to form Asp-AMP and then transferred to the acceptor end of tRNA(Asp/Asn). The protein is Aspartate--tRNA(Asp/Asn) ligase of Ehrlichia ruminantium (strain Gardel).